Here is a 492-residue protein sequence, read N- to C-terminus: Histone-lysine N-methyltransferase SUVR4 (492 aa).

The interval 112–138 (ETRSASSGSSIQVVQKQPQLSNGDRKR) is disordered. Polar residues predominate over residues 113 to 133 (TRSASSGSSIQVVQKQPQLSN). Residues cysteine 196, cysteine 197, cysteine 200, cysteine 204, cysteine 213, cysteine 281, cysteine 285, cysteine 287, and cysteine 291 each contribute to the Zn(2+) site. The Pre-SET domain maps to 196–299 (CCANCKGNCL…QCGNRVVQRG (104 aa)). In terms of domain architecture, SET spans 302–435 (CQLQVYFTQE…AMDELTWDYM (134 aa)). S-adenosyl-L-methionine is bound by residues 313–315 (KGW) and 391–392 (NH). Residue cysteine 394 coordinates Zn(2+). Residue tyrosine 434 coordinates S-adenosyl-L-methionine. The Post-SET domain occupies 446 to 462 (KAFRCCCGSESCRDRKI). Residues cysteine 450, cysteine 452, and cysteine 457 each contribute to the Zn(2+) site. A disordered region spans residues 463–492 (KGSQGKSIERRKIVSAKKQQGSKEVSKKRK).

It belongs to the class V-like SAM-binding methyltransferase superfamily. Histone-lysine methyltransferase family. In terms of assembly, interacts with ubiquitin.

The protein resides in the nucleus. It localises to the chromosome. The catalysed reaction is N(6)-methyl-L-lysyl(9)-[histone H3] + S-adenosyl-L-methionine = N(6),N(6)-dimethyl-L-lysyl(9)-[histone H3] + S-adenosyl-L-homocysteine + H(+). It catalyses the reaction N(6),N(6)-dimethyl-L-lysyl(9)-[histone H3] + S-adenosyl-L-methionine = N(6),N(6),N(6)-trimethyl-L-lysyl(9)-[histone H3] + S-adenosyl-L-homocysteine + H(+). Its function is as follows. Histone methyltransferase that converts monomethylated 'Lys-9' of histone H3 (H3K9me1) to dimethylated 'Lys-9' (H3K9me2) in the absence of bound ubiquitin, and to trimethylated 'Lys-9' (H3K9me3) in the presence of bound ubiquitin. Acts in a locus-specific manner and contributes to the transcriptional silencing of pseudogenes and transposons. H3 'Lys-9' methylation represents a specific tag for epigenetic transcriptional repression. In Arabidopsis thaliana (Mouse-ear cress), this protein is Histone-lysine N-methyltransferase SUVR4 (SUVR4).